Reading from the N-terminus, the 370-residue chain is Propane 2-monooxygenase, reductase component (370 aa).

The segment covering 1–14 has biased composition (basic residues); that stretch reads MAPRPLRRHPPLHH. Residues 1 to 21 form a disordered region; it reads MAPRPLRRHPPLHHSFHESRR. Residues 28–118 enclose the 2Fe-2S ferredoxin-type domain; it reads HRINFEPVDI…DCTIELLNFD (91 aa). 4 residues coordinate [2Fe-2S] cluster: cysteine 62, cysteine 67, cysteine 70, and cysteine 102. The 102-residue stretch at 128–229 folds into the FAD-binding FR-type domain; that stretch reads IQDVRTRVTR…TGPYGSFTIK (102 aa).

It belongs to the TmoA/XamoA family. As to quaternary structure, the propane 2-monooxygenase multicomponent enzyme system is composed of an electron transfer component and a monooxygenase component interacting with the effector protein PrmD. The electron transfer component is composed of a reductase (PrmB), and the monooxygenase component is formed by a large subunit (PrmA) and a small subunit (PrmC). FAD is required as a cofactor. Requires [2Fe-2S] cluster as cofactor.

In terms of biological role, reductase component of the propane 2-monooxygenase multicomponent enzyme system which is involved in the degradation of propane via the O2-dependent hydroxylation of propane. Reductase catalyzes the transfer of electrons from NADH or NADPH to monooxygenase. The protein is Propane 2-monooxygenase, reductase component of Rhodococcus jostii (strain RHA1).